The chain runs to 155 residues: UPF0178 protein ACIAD2644 (155 aa).

Positions 120 to 155 (GAGVQTGGPPPISERDKREFSSALDQTILKQKRKTA) are disordered.

The protein belongs to the UPF0178 family.

This chain is UPF0178 protein ACIAD2644, found in Acinetobacter baylyi (strain ATCC 33305 / BD413 / ADP1).